Reading from the N-terminus, the 315-residue chain is Atrochrysone carboxyl ACP thioesterase (315 aa).

The Zn(2+) site is built by H95, H97, D99, and H100. D99 (proton donor/acceptor) is an active-site residue.

Belongs to the metallo-beta-lactamase superfamily. It depends on Zn(2+) as a cofactor. Endocrocin is specifically produced in conidia.

The enzyme catalyses atrochrysone carboxyl-[ACP] + H2O = atrochrysone carboxylate + holo-[ACP] + H(+). Its function is as follows. Atrochrysone carboxyl ACP thioesterase; part of the gene cluster that mediates the biosynthesis of endocrocin, a simple anthraquinone interesting for many biotechnological applications. The pathway begins with the synthesis of atrochrysone thioester by the polyketide synthase (PKS) encA. The atrochrysone carboxyl ACP thioesterase encB then breaks the thioester bond and releases the atrochrysone carboxylic acid from encA. The atrochrysone carboxylic acid is then converted to endocrocin anthrone which is further oxidized into endocrocin by the anthrone oxygenase encC. The exact function of encD has not been identified yet, but it negatively regulates endocrocin production, likely through the modification of endocrocin itself. In Aspergillus fumigatus (strain ATCC MYA-4609 / CBS 101355 / FGSC A1100 / Af293) (Neosartorya fumigata), this protein is Atrochrysone carboxyl ACP thioesterase.